A 319-amino-acid chain; its full sequence is Large ribosomal subunit protein uL29m (319 aa).

Positions 1 to 55 (MWKRSFHSQGGPLRARTKFTKPKPKQPVLPKDKIRPPTQLTHHSNNLRITEPIPP) are disordered. Residues 15 to 24 (ARTKFTKPKP) show a composition bias toward basic residues. Residues 38–48 (TQLTHHSNNLR) are compositionally biased toward polar residues.

It belongs to the universal ribosomal protein uL29 family. As to quaternary structure, component of the mitochondrial large ribosomal subunit. Mature mitochondrial ribosomes consist of a small (37S) and a large (54S) subunit. The 37S subunit contains at least 33 different proteins and 1 molecule of RNA (15S). The 54S subunit contains at least 45 different proteins and 1 molecule of RNA (21S).

It localises to the mitochondrion. The protein is Large ribosomal subunit protein uL29m (MRPL4) of Saccharomyces cerevisiae (strain YJM789) (Baker's yeast).